The sequence spans 752 residues: uncharacterized protein (752 aa).

A phosphoserine mark is found at Ser202 and Ser582. The tract at residues 596-752 (EEEKESVEVE…KTGEDGEIVL (157 aa)) is disordered. 2 stretches are compositionally biased toward basic and acidic residues: residues 601-613 (SVEV…KNDL) and 641-677 (LKSE…HFEV). Positions 695 to 718 (NNVAETILEVTSSPKSSENSQKQS) are enriched in polar residues. A phosphoserine mark is found at Ser707 and Ser738.

This is an uncharacterized protein from Schizosaccharomyces pombe (strain 972 / ATCC 24843) (Fission yeast).